A 256-amino-acid chain; its full sequence is ATP synthase subunit a (256 aa).

A propeptide spans 1 to 7 (MLNLFIT) (removed in mature form). The next 6 membrane-spanning stretches (helical) occupy residues 33-53 (FTTF…LNLL), 92-112 (YFPL…ISMI), 122-142 (LIFI…IGLT), 148-168 (FFSL…LVLI), 188-208 (VLSG…LMSM), and 209-229 (SIIT…IVVL).

This sequence belongs to the ATPase A chain family. F-type ATPases have 2 components, CF(1) - the catalytic core - and CF(0) - the membrane proton channel. CF(1) has five subunits: alpha(3), beta(3), gamma(1), delta(1), epsilon(1). CF(0) has three main subunits: a, b and c.

The protein resides in the mitochondrion inner membrane. Its function is as follows. Mitochondrial membrane ATP synthase (F(1)F(0) ATP synthase or Complex V) produces ATP from ADP in the presence of a proton gradient across the membrane which is generated by electron transport complexes of the respiratory chain. F-type ATPases consist of two structural domains, F(1) - containing the extramembraneous catalytic core and F(0) - containing the membrane proton channel, linked together by a central stalk and a peripheral stalk. During catalysis, ATP synthesis in the catalytic domain of F(1) is coupled via a rotary mechanism of the central stalk subunits to proton translocation. Key component of the proton channel; it may play a direct role in the translocation of protons across the membrane. The protein is ATP synthase subunit a (ATP6) of Kluyveromyces lactis (strain ATCC 8585 / CBS 2359 / DSM 70799 / NBRC 1267 / NRRL Y-1140 / WM37) (Yeast).